A 476-amino-acid polypeptide reads, in one-letter code: 3-isopropylmalate dehydratase large subunit (476 aa).

Cys-357, Cys-417, and Cys-420 together coordinate [4Fe-4S] cluster.

It belongs to the aconitase/IPM isomerase family. LeuC type 1 subfamily. As to quaternary structure, heterodimer of LeuC and LeuD. [4Fe-4S] cluster serves as cofactor.

The catalysed reaction is (2R,3S)-3-isopropylmalate = (2S)-2-isopropylmalate. The protein operates within amino-acid biosynthesis; L-leucine biosynthesis; L-leucine from 3-methyl-2-oxobutanoate: step 2/4. Its function is as follows. Catalyzes the isomerization between 2-isopropylmalate and 3-isopropylmalate, via the formation of 2-isopropylmaleate. This is 3-isopropylmalate dehydratase large subunit from Mycobacterium avium (strain 104).